The following is a 496-amino-acid chain: Matrilin-1 (496 aa).

The signal sequence occupies residues 1–22; it reads MRVLSGTSLMLCSLLLLLQALC. The 200-residue stretch at 23 to 222 folds into the VWFA 1 domain; the sequence is SPGLAPQSRG…SRKFQEAFCV (200 aa). Asparagine 76 is a glycosylation site (N-linked (GlcNAc...) asparagine). Residues 223–263 enclose the EGF-like domain; it reads VSDLCATGDHDCEQVCISSPGSYTCACHEGFTLNSDGKTCN. Intrachain disulfides connect cysteine 227–cysteine 238, cysteine 234–cysteine 247, and cysteine 249–cysteine 262. The VWFA 2 domain maps to 264-453; the sequence is VCSGGGGSSA…GKKLQKKICV (190 aa). Asparagine 344 is a glycosylation site (N-linked (GalNAc...) asparagine). Positions 467-495 form a coiled coil; that stretch reads QAKVEGLLQALTRKLEAVSKRLAILENTV.

In terms of assembly, homotrimer. Part of a complex composed of MATN1 (via VWFA1 domain), type 2 collagens and type 6 collagens. Forms a complex (via covalent bonds) with ACAN; the interaction increases in abundance with increasing age of the organism via an increase in occupancy of MATN1 binding sites. Interacts with COMP. N-glycosylated; reduces binding affinity for type 2 collagens.

The protein localises to the secreted. The protein resides in the extracellular space. It is found in the extracellular matrix. A major component of the extracellular matrix of non-articular cartilage. Binds to type 2 collagens and forms long concatenated protein networks as part of the extracellular matrix. Required for the network-like organization and bundling of collagen fibrils surrounding chondrocytes in the zones of maturation and hypertrophy. Required for mechanotransduction and adaption to mechanical loading in cartilage chondrocytes, resulting in an increase in expression of the extracellular matrix components ACAN and COL2A1. Acts as a moderator of angiogenesis in response to injury. This Homo sapiens (Human) protein is Matrilin-1.